Reading from the N-terminus, the 115-residue chain is Large ribosomal subunit protein uL18 (115 aa).

It belongs to the universal ribosomal protein uL18 family. In terms of assembly, part of the 50S ribosomal subunit; part of the 5S rRNA/L5/L18/L25 subcomplex. Contacts the 5S and 23S rRNAs.

Its function is as follows. This is one of the proteins that bind and probably mediate the attachment of the 5S RNA into the large ribosomal subunit, where it forms part of the central protuberance. This is Large ribosomal subunit protein uL18 from Baumannia cicadellinicola subsp. Homalodisca coagulata.